Consider the following 267-residue polypeptide: MVKISFQPAVAGIKGDKADKASASAPAPASATEILLTPAREEQPPQHRSKRGGSVGGVCYLSMGMVVLLMGLVFASVYIYRYFFLAQLARDNFFRCGVLYEDSLSSQVRTQMELEEDVKIYLDENYERINVPVPQFGGGDPADIIHDFQRGLTAYHDISLDKCYVIELNTTIVLPPRNFWELLMNVKRGTYLPQTYIIQEEMVVTEHVSDKEALGSFIYHLCNGKDTYRLRRRATRRRINKRGAKNCNAIRHFENTFVVETLICGVV.

The residue at position 37 (T37) is a Phosphothreonine. The helical; Signal-anchor for type II membrane protein transmembrane segment at 55-75 (VGGVCYLSMGMVVLLMGLVFA) threads the bilayer. The region spanning 136–230 (FGGGDPADII…LCNGKDTYRL (95 aa)) is the BRICHOS domain. A disulfide bridge links C163 with C222. N169 carries an N-linked (GlcNAc...) asparagine glycan.

It belongs to the ITM2 family. Interacts with BACE1. Interacts with APP. Interacts with STMN2. Type I membrane-bound, as well as soluble, furin has a pre-eminent role in ITM2C proteolytic processing. PCSK7 and PCSK5 may also be involved although to a lesser extent. The soluble form of PCSK7 is incapable of processing ITM2C. Fails to undergo shedding by ADAM10 and intramembrane cleavage by SPPL2B. High levels in the brain, specifically in the cerebral cortex, medulla, amygdala, hippocampus, thalamus, caudate nucleus, cerebellum, olfactory lobe and spinal cord. Very low levels in other organs.

It localises to the lysosome membrane. The protein localises to the cell membrane. Its function is as follows. Negative regulator of amyloid-beta peptide production. May inhibit the processing of APP by blocking its access to alpha- and beta-secretase. Binding to the beta-secretase-cleaved APP C-terminal fragment is negligible, suggesting that ITM2C is a poor gamma-secretase cleavage inhibitor. May play a role in TNF-induced cell death and neuronal differentiation. The chain is Integral membrane protein 2C (ITM2C) from Homo sapiens (Human).